Consider the following 485-residue polypeptide: MSSSLKQLKEQFVSDLTGGTIEEIYAVTSIALSSYLSFRLLKKSLGDLALIYDYILNVLTILASITVYSNSPSYLHYFIVIPSLVIYLVNYHVEKPSSPHRQNDTKEDKSDELLPRKQFITAYRSQMLIITNLAILAVDFPIFPRRFAKVETWGTSMMDLGVGSFVFSMGLANSRQLIKNHTDNYKFSWKSYLKTIKQNFIKSVPILVLGAIRFVSVKQLDYQEHETEYGIHWNFFFTLGFLPIVLGILDPVLNLVPRFIIGIGISIAYEVALNKTGLLKFILSSENRLESLITMNKEGIFSFIGYLCIFIIGQSFGSFVLTGYKTKNNLITISKIRISKKQHKKESSSFFSVATTQGLYLACIFYHLAFSLFISNLSFLQPISRRLANFPYVMWVVSYNATFLLCYDLIEKFIPGNLTSTVLDSINNNGLFIFLVSNLLTGFINMSINTLETSNKMAVIILIGYSLTWTLLALYLDKRKIYIKL.

A run of 2 helical transmembrane segments spans residues 48 to 68 (LALIYDYILNVLTILASITVY) and 73 to 93 (SYLHYFIVIPSLVIYLVNYHV). Asn-103 is a glycosylation site (N-linked (GlcNAc...) asparagine). 2 helical membrane passes run 123 to 143 (YRSQMLIITNLAILAVDFPIF) and 152 to 172 (TWGTSMMDLGVGSFVFSMGLA). Asn-180 carries N-linked (GlcNAc...) asparagine glycosylation. Helical transmembrane passes span 200–217 (FIKSVPILVLGAIRFVSV), 229–249 (YGIHWNFFFTLGFLPIVLGIL), 259–279 (FIIGIGISIAYEVALNKTGLL), 300–320 (IFSFIGYLCIFIIGQSFGSFV), 359–379 (LYLACIFYHLAFSLFISNLSF), and 390–410 (FPYVMWVVSYNATFLLCYDLI). Asn-417 is a glycosylation site (N-linked (GlcNAc...) asparagine). A run of 2 helical transmembrane segments spans residues 431–451 (LFIFLVSNLLTGFINMSINTL) and 457–477 (MAVIILIGYSLTWTLLALYLD).

It belongs to the PIGW family.

It is found in the endoplasmic reticulum membrane. It functions in the pathway glycolipid biosynthesis; glycosylphosphatidylinositol-anchor biosynthesis. Its function is as follows. Probable acetyltransferase, which acetylates the inositol ring of phosphatidylinositol during biosynthesis of GPI-anchor. This Candida albicans (strain SC5314 / ATCC MYA-2876) (Yeast) protein is GPI-anchored wall transfer protein 1 (GWT1).